Here is a 364-residue protein sequence, read N- to C-terminus: tRNA N6-adenosine threonylcarbamoyltransferase (364 aa).

The Fe cation site is built by His115 and His119. Substrate contacts are provided by residues 137–141 (LVSGG), Asp170, Gly183, and Asn288. Asp316 is a Fe cation binding site. The disordered stretch occupies residues 341–364 (PRSRWPLDEKSAPLIGTGRRGTKA).

The protein belongs to the KAE1 / TsaD family. The cofactor is Fe(2+).

The protein localises to the cytoplasm. The enzyme catalyses L-threonylcarbamoyladenylate + adenosine(37) in tRNA = N(6)-L-threonylcarbamoyladenosine(37) in tRNA + AMP + H(+). In terms of biological role, required for the formation of a threonylcarbamoyl group on adenosine at position 37 (t(6)A37) in tRNAs that read codons beginning with adenine. Is involved in the transfer of the threonylcarbamoyl moiety of threonylcarbamoyl-AMP (TC-AMP) to the N6 group of A37, together with TsaE and TsaB. TsaD likely plays a direct catalytic role in this reaction. The chain is tRNA N6-adenosine threonylcarbamoyltransferase from Bartonella henselae (strain ATCC 49882 / DSM 28221 / CCUG 30454 / Houston 1) (Rochalimaea henselae).